We begin with the raw amino-acid sequence, 401 residues long: Probable tRNA sulfurtransferase (401 aa).

The region spanning 63–168 (TTAEQALSCL…EREAFLYGAR (106 aa)) is the THUMP domain. Residues 186–187 (LL), 211–212 (YF), R268, G290, and Q299 contribute to the ATP site.

This sequence belongs to the ThiI family.

It localises to the cytoplasm. The enzyme catalyses [ThiI sulfur-carrier protein]-S-sulfanyl-L-cysteine + a uridine in tRNA + 2 reduced [2Fe-2S]-[ferredoxin] + ATP + H(+) = [ThiI sulfur-carrier protein]-L-cysteine + a 4-thiouridine in tRNA + 2 oxidized [2Fe-2S]-[ferredoxin] + AMP + diphosphate. It catalyses the reaction [ThiS sulfur-carrier protein]-C-terminal Gly-Gly-AMP + S-sulfanyl-L-cysteinyl-[cysteine desulfurase] + AH2 = [ThiS sulfur-carrier protein]-C-terminal-Gly-aminoethanethioate + L-cysteinyl-[cysteine desulfurase] + A + AMP + 2 H(+). Its pathway is cofactor biosynthesis; thiamine diphosphate biosynthesis. In terms of biological role, catalyzes the ATP-dependent transfer of a sulfur to tRNA to produce 4-thiouridine in position 8 of tRNAs, which functions as a near-UV photosensor. Also catalyzes the transfer of sulfur to the sulfur carrier protein ThiS, forming ThiS-thiocarboxylate. This is a step in the synthesis of thiazole, in the thiamine biosynthesis pathway. The sulfur is donated as persulfide by IscS. This is Probable tRNA sulfurtransferase from Treponema pallidum subsp. pallidum (strain SS14).